A 130-amino-acid polypeptide reads, in one-letter code: Small ribosomal subunit protein uS8 (130 aa).

It belongs to the universal ribosomal protein uS8 family. As to quaternary structure, part of the 30S ribosomal subunit. Contacts proteins S5 and S12.

Functionally, one of the primary rRNA binding proteins, it binds directly to 16S rRNA central domain where it helps coordinate assembly of the platform of the 30S subunit. The chain is Small ribosomal subunit protein uS8 from Vibrio parahaemolyticus serotype O3:K6 (strain RIMD 2210633).